The following is a 183-amino-acid chain: Threonylcarbamoyl-AMP synthase (183 aa).

In terms of domain architecture, YrdC-like spans 1-183; it reads MNREQIADAL…LRTNQLFRQG (183 aa).

The protein belongs to the SUA5 family. TsaC subfamily.

The protein localises to the cytoplasm. The catalysed reaction is L-threonine + hydrogencarbonate + ATP = L-threonylcarbamoyladenylate + diphosphate + H2O. In terms of biological role, required for the formation of a threonylcarbamoyl group on adenosine at position 37 (t(6)A37) in tRNAs that read codons beginning with adenine. Catalyzes the conversion of L-threonine, HCO(3)(-)/CO(2) and ATP to give threonylcarbamoyl-AMP (TC-AMP) as the acyladenylate intermediate, with the release of diphosphate. In Haemophilus influenzae (strain ATCC 51907 / DSM 11121 / KW20 / Rd), this protein is Threonylcarbamoyl-AMP synthase.